Here is a 316-residue protein sequence, read N- to C-terminus: Nucleoprotein (316 aa).

Residues Tyr43, Tyr46, Val76, Arg122, and Lys240 each contribute to the RNA site.

The protein belongs to the tenuiviruses nucleocapsid protein family.

It localises to the virion. The protein localises to the host cytoplasm. Encapsidates the genome, protecting it from nucleases. The encapsidated genomic RNA is termed the nucleocapsid (NC), and serves as template for viral transcription and replication. The sequence is that of Nucleoprotein from Maize stripe virus (MStV).